A 140-amino-acid polypeptide reads, in one-letter code: FAD synthase (140 aa).

Residues 9-10 (TF), 14-17 (HPGH), and aspartate 92 contribute to the ATP site.

It belongs to the archaeal FAD synthase family. Homodimer. A divalent metal cation serves as cofactor.

The catalysed reaction is FMN + ATP + H(+) = FAD + diphosphate. It participates in cofactor biosynthesis; FAD biosynthesis; FAD from FMN: step 1/1. Its function is as follows. Catalyzes the transfer of the AMP portion of ATP to flavin mononucleotide (FMN) to produce flavin adenine dinucleotide (FAD) coenzyme. This Natronomonas pharaonis (strain ATCC 35678 / DSM 2160 / CIP 103997 / JCM 8858 / NBRC 14720 / NCIMB 2260 / Gabara) (Halobacterium pharaonis) protein is FAD synthase.